The chain runs to 153 residues: NADH dehydrogenase [ubiquinone] 1 beta subcomplex subunit 11, mitochondrial (153 aa).

Residues 1 to 29 (MAAGLFGLSARLLLAAAATRGLPAARVRW) constitute a mitochondrion transit peptide. The disordered stretch occupies residues 40–77 (PSAVAGKRPPEPTTQWQEDPEPEDENLYEKNPDSHGYD). Residues 66–77 (LYEKNPDSHGYD) are compositionally biased toward basic and acidic residues. A helical membrane pass occupies residues 89-109 (LVFFFGVSIILVLGSTFVAYL).

Belongs to the complex I NDUFB11 subunit family. As to quaternary structure, complex I is composed of 45 different subunits. Interacts with BCAP31.

It is found in the mitochondrion inner membrane. Accessory subunit of the mitochondrial membrane respiratory chain NADH dehydrogenase (Complex I), that is believed not to be involved in catalysis. Complex I functions in the transfer of electrons from NADH to the respiratory chain. The immediate electron acceptor for the enzyme is believed to be ubiquinone. This chain is NADH dehydrogenase [ubiquinone] 1 beta subcomplex subunit 11, mitochondrial (NDUFB11), found in Pan troglodytes (Chimpanzee).